The sequence spans 593 residues: Aspartate--tRNA ligase (593 aa).

Glu-181 serves as a coordination point for L-aspartate. Residues 205-208 are aspartate; the sequence is QLYK. Arg-227 contributes to the L-aspartate binding site. Residues 227 to 229 and Gln-236 each bind ATP; that span reads RDE. Position 455 (His-455) interacts with L-aspartate. ATP is bound at residue Glu-489. L-aspartate is bound at residue Arg-496. Position 541–544 (541–544) interacts with ATP; sequence GLDR.

Belongs to the class-II aminoacyl-tRNA synthetase family. Type 1 subfamily. Homodimer.

Its subcellular location is the cytoplasm. It catalyses the reaction tRNA(Asp) + L-aspartate + ATP = L-aspartyl-tRNA(Asp) + AMP + diphosphate. Its function is as follows. Catalyzes the attachment of L-aspartate to tRNA(Asp) in a two-step reaction: L-aspartate is first activated by ATP to form Asp-AMP and then transferred to the acceptor end of tRNA(Asp). This is Aspartate--tRNA ligase from Ruminiclostridium cellulolyticum (strain ATCC 35319 / DSM 5812 / JCM 6584 / H10) (Clostridium cellulolyticum).